We begin with the raw amino-acid sequence, 412 residues long: Gamma-glutamyl phosphate reductase (412 aa).

It belongs to the gamma-glutamyl phosphate reductase family.

It is found in the cytoplasm. The enzyme catalyses L-glutamate 5-semialdehyde + phosphate + NADP(+) = L-glutamyl 5-phosphate + NADPH + H(+). Its pathway is amino-acid biosynthesis; L-proline biosynthesis; L-glutamate 5-semialdehyde from L-glutamate: step 2/2. Functionally, catalyzes the NADPH-dependent reduction of L-glutamate 5-phosphate into L-glutamate 5-semialdehyde and phosphate. The product spontaneously undergoes cyclization to form 1-pyrroline-5-carboxylate. The polypeptide is Gamma-glutamyl phosphate reductase (Bartonella quintana (strain Toulouse) (Rochalimaea quintana)).